The sequence spans 257 residues: Acyl-[acyl-carrier-protein]--UDP-N-acetylglucosamine O-acyltransferase (257 aa).

Belongs to the transferase hexapeptide repeat family. LpxA subfamily. As to quaternary structure, homotrimer.

Its subcellular location is the cytoplasm. The catalysed reaction is a (3R)-hydroxyacyl-[ACP] + UDP-N-acetyl-alpha-D-glucosamine = a UDP-3-O-[(3R)-3-hydroxyacyl]-N-acetyl-alpha-D-glucosamine + holo-[ACP]. Its pathway is glycolipid biosynthesis; lipid IV(A) biosynthesis; lipid IV(A) from (3R)-3-hydroxytetradecanoyl-[acyl-carrier-protein] and UDP-N-acetyl-alpha-D-glucosamine: step 1/6. Involved in the biosynthesis of lipid A, a phosphorylated glycolipid that anchors the lipopolysaccharide to the outer membrane of the cell. The chain is Acyl-[acyl-carrier-protein]--UDP-N-acetylglucosamine O-acyltransferase from Anaeromyxobacter sp. (strain K).